The sequence spans 48 residues: Large ribosomal subunit protein bL33A (48 aa).

Belongs to the bacterial ribosomal protein bL33 family.

The protein is Large ribosomal subunit protein bL33A of Exiguobacterium sibiricum (strain DSM 17290 / CCUG 55495 / CIP 109462 / JCM 13490 / 255-15).